The primary structure comprises 459 residues: Endoglucanase EG-1 (459 aa).

The signal sequence occupies residues 1–22 (MAPSVTLPLTTAILAIARLVAA). Glutamine 23 bears the Pyrrolidone carboxylic acid mark. The segment at 23 to 397 (QQPGTSTPEV…DIGSTTNSTA (375 aa)) is catalytic. Cystine bridges form between cysteine 41–cysteine 47, cysteine 71–cysteine 92, cysteine 82–cysteine 88, cysteine 161–cysteine 360, cysteine 193–cysteine 216, cysteine 197–cysteine 215, cysteine 236–cysteine 241, and cysteine 246–cysteine 315. Asparagine 78 carries an N-linked (GlcNAc) asparagine glycan. An N-linked (GlcNAc...) (high mannose) asparagine glycan is attached at asparagine 204. Catalysis depends on glutamate 218, which acts as the Nucleophile. Catalysis depends on glutamate 223, which acts as the Proton donor/acceptor. Residues 390-425 (GSTTNSTAPPPPPASSTTFSTTRRSSTTSSSPSCTQ) form a disordered region. N-linked (GlcNAc...) asparagine glycosylation is present at asparagine 394. The segment at 398 to 423 (PPPPPASSTTFSTTRRSSTTSSSPSC) is linker. Positions 404–425 (SSTTFSTTRRSSTTSSSPSCTQ) are enriched in low complexity. 3 disulfides stabilise this stretch: cysteine 423–cysteine 439, cysteine 431–cysteine 448, and cysteine 442–cysteine 458. The region spanning 423 to 459 (CTQTHWGQCGGIGYSGCKTCTSGTTCQYSNDYYSQCL) is the CBM1 domain.

This sequence belongs to the glycosyl hydrolase 7 (cellulase C) family. In terms of processing, asn-204 contains mainly a high-mannose-type glycan (Hex(7-9)GlcNAc(2)), with a small fraction (8%) bearing a single GlcNAc at this site.

It is found in the secreted. It catalyses the reaction Endohydrolysis of (1-&gt;4)-beta-D-glucosidic linkages in cellulose, lichenin and cereal beta-D-glucans.. In terms of biological role, endoglucanase (EG) that cleaves the internal beta-1,4-glucosidic bonds in cellulose. The degradation of cellulose involves an interplay between different cellulolytic enzymes. Hydrolysis starts with EGs, which cut internal glycosidic linkages to reduce the polymerization degree of the substrate and creates new chain ends for exocellobiohydrolases (CBHs). The CBH release the disaccharide cellobiose from the non-reducing end of the cellulose polymer chain. Finally, beta-1,4-glucosidases hydrolyze the cellobiose and other short cello-oligosaccharides into glucose units. In Hypocrea jecorina (Trichoderma reesei), this protein is Endoglucanase EG-1 (egl1).